A 671-amino-acid polypeptide reads, in one-letter code: DEAD-box ATP-dependent RNA helicase 7 (671 aa).

The disordered stretch occupies residues 1–84 (MPSLMLSDKK…EKKKSSKKVK (84 aa)). The span at 26–41 (LDSKKGKKEQKLKLSD) shows a compositional bias: basic and acidic residues. 2 positions are modified to phosphoserine: serine 40 and serine 42. The segment covering 50–60 (KKSKKKDKKRK) has biased composition (basic residues). A Q motif motif is present at residues 96-124 (NAVSKFRISAPLREKLKANGIEALFPIQA). A Helicase ATP-binding domain is found at 127 to 309 (FDMVLDGADL…NRFLKRDQKT (183 aa)). 140–147 (ARTGQGKT) is a binding site for ATP. Positions 255 to 258 (DEAD) match the DEAD box motif. A Helicase C-terminal domain is found at 339-479 (LIPDIISCYS…HLAAPQPDEI (141 aa)). Residues 627–671 (EREPLPQKRFGGGGRGNRFGGGGGNRFGGGGGRGRGGSGGRGQRY) are disordered. Residues 636-671 (FGGGGRGNRFGGGGGNRFGGGGGRGRGGSGGRGQRY) are compositionally biased toward gly residues.

This sequence belongs to the DEAD box helicase family. DDX21/DDX50 subfamily.

Its subcellular location is the nucleus. It catalyses the reaction ATP + H2O = ADP + phosphate + H(+). In Arabidopsis thaliana (Mouse-ear cress), this protein is DEAD-box ATP-dependent RNA helicase 7 (RH7).